The following is a 1442-amino-acid chain: Death-associated protein kinase 1 (1442 aa).

The Protein kinase domain maps to 13–275 (YDTGEELGSG…IQDSLQHPWI (263 aa)). Residues 19 to 27 (LGSGQFAVV) and Lys42 contribute to the ATP site. The Proton acceptor role is filled by Asp139. The tract at residues 267–334 (QDSLQHPWIK…RSNMSVARSD (68 aa)) is calmodulin-binding. Ser289 carries the phosphoserine; by RPS6KA1 and RPS6KA3 modification. The tract at residues 292-301 (NMEKFKKFAA) is autoinhibitory domain. Position 308 is a phosphoserine; by autocatalysis (Ser308). Ser319 and Ser333 each carry phosphoserine. 8 ANK repeats span residues 378-407 (HGTPPLLIAAGCGNIQMLQLLIKRGSRIDV), 411-440 (GGSNAIYWASRHGHVDTLKFLNENKCPLDV), 444-473 (SGETALHVAARYGHADVVQLLCSFGSNPDF), 477-506 (EEETPLHCAAWHGYYSVAKALCEVGCNVNI), 510-539 (EGETPLLTASARGYHDIVECLAEHGADLNA), 543-572 (DGHIALHLAVRRCQMEVIKTLLGHGSFVDF), 576-605 (HGNTPLHVACKDGSAPIVVALCEASCNLDI), and 609-638 (YGRTPLHLAANNGILDVVRYLCLMGANVEA). The 275-residue stretch at 681-955 (TQNLQPRIKL…NHLQEIRSQI (275 aa)) folds into the Roc domain. Ser734 carries the phosphoserine; by MAPK1 modification. The stretch at 875 to 904 (KLKNPLRVVLVATHADIMNIPRPAGGEFGY) is one ANK 9 repeat. Position 1115 is a phosphoserine (Ser1115). Residues 1164 to 1196 (DADIRLWVSGCRIANRGAELLVLLVNHGQGIEV) form an ANK 10 repeat. Residues 1312 to 1396 (KLSRLLDPPD…DAADFLLKAS (85 aa)) form the Death domain. Phosphoserine is present on Ser1433.

This sequence belongs to the protein kinase superfamily. CAMK Ser/Thr protein kinase family. DAP kinase subfamily. Interacts with KLHL20. Interacts (via death domain) with MAPK1 and MAPK3. Interacts with MAP1B (via N-terminus). Interacts with PRKD1 in an oxidative stress-regulated manner. Interacts with PIN1, PDCD6, BECN1, TSC2 and STX1A. Interacts (via kinase domain) with DAPK3 (via kinase domain). Interacts with GRINB. Interacts (via death domain) with UNC5B (via death domain). Interacts with UNC5C (via death domain). Mg(2+) is required as a cofactor. Ubiquitinated by the BCR(KLHL20) E3 ubiquitin ligase complex, leading to its degradation by the proteasome. Post-translationally, in response to mitogenic stimulation (PMA or EGF), phosphorylated at Ser-289; phosphorylation suppresses DAPK1 pro-apoptotic function. Autophosphorylation at Ser-308 inhibits its catalytic activity. Phosphorylation at Ser-734 by MAPK1 increases its catalytic activity and promotes cytoplasmic retention of MAPK1. Endoplasmic-stress can cause dephosphorylation at Ser-308. In terms of tissue distribution, high levels in bladder, uterus, vas deferens, lung, liver and kidney.

The catalysed reaction is L-seryl-[protein] + ATP = O-phospho-L-seryl-[protein] + ADP + H(+). The enzyme catalyses L-threonyl-[protein] + ATP = O-phospho-L-threonyl-[protein] + ADP + H(+). With respect to regulation, activated by Ca(2+)/calmodulin. Regulated by a locking mechanism, involving autophosphorylation at Ser-308 and calmodulin binding. In the inactive state, Ser-308 is phosphorylated. Activation involves its dephosphorylation and a release-of-autoinhibition mechanism where binding of calmodulin induces a conformational change that relieves the steric block of the active site by the autoinhibitory domain. Activity is modulated by UNC5B and NTN1. UNC5B activates it by inhibiting the phosphorylation at Ser-308, whereas NTN1 inhibits UNC5B-mediated activation of DAPK1. Endoplasmic-stress activates by causing Ser-308 dephosphorylation. Functionally, calcium/calmodulin-dependent serine/threonine kinase involved in multiple cellular signaling pathways that trigger cell survival, apoptosis, and autophagy. Regulates both type I apoptotic and type II autophagic cell deaths signal, depending on the cellular setting. The former is caspase-dependent, while the latter is caspase-independent and is characterized by the accumulation of autophagic vesicles. Phosphorylates PIN1 resulting in inhibition of its catalytic activity, nuclear localization, and cellular function. Phosphorylates TPM1, enhancing stress fiber formation in endothelial cells. Phosphorylates STX1A and significantly decreases its binding to STXBP1. Phosphorylates PRKD1 and regulates JNK signaling by binding and activating PRKD1 under oxidative stress. Phosphorylates BECN1, reducing its interaction with BCL2 and BCL2L1 and promoting the induction of autophagy. Phosphorylates TSC2, disrupting the TSC1-TSC2 complex and stimulating mTORC1 activity in a growth factor-dependent pathway. Phosphorylates RPS6, MYL9 and DAPK3. Acts as a signaling amplifier of NMDA receptors at extrasynaptic sites for mediating brain damage in stroke. Cerebral ischemia recruits DAPK1 into the NMDA receptor complex and it phosphorylates GRINB at Ser-1303 inducing injurious Ca(2+) influx through NMDA receptor channels, resulting in an irreversible neuronal death. Required together with DAPK3 for phosphorylation of RPL13A upon interferon-gamma activation which is causing RPL13A involvement in transcript-selective translation inhibition. The protein is Death-associated protein kinase 1 (Dapk1) of Mus musculus (Mouse).